The sequence spans 869 residues: Probable inorganic carbon transporter subunit DabA (869 aa).

The segment at 1–32 (MSTATLEQRAKRGEAPRANDAGHCAHPADGAR) is disordered. The span at 8–17 (QRAKRGEAPR) shows a compositional bias: basic and acidic residues. 4 residues coordinate Zn(2+): Cys-376, Asp-378, His-555, and Cys-570.

Belongs to the inorganic carbon transporter (TC 9.A.2) DabA family. As to quaternary structure, forms a complex with DabB. Requires Zn(2+) as cofactor.

It localises to the cell inner membrane. Part of an energy-coupled inorganic carbon pump. The polypeptide is Probable inorganic carbon transporter subunit DabA (Burkholderia multivorans (strain ATCC 17616 / 249)).